A 259-amino-acid polypeptide reads, in one-letter code: MQLQLICEDPSQQSHLDELAARWQLSHTDDSDFALVLTTERLELRKVDEPKLGAIFVDLIGGAVGHRRKFGGGKGQAIAKAAGLNKGATPTVLDGTAGLGRDAFVLASLGCKVQMVERHPVVAALLDDGLARAKHDPEIGTWVSERMSLIHASSHDALEQLAQDKDFLQPDVVYLDPMYPHPENKKKSALVKKEMRVFQSLVGADLDADGLLAPAMALASKRVVVKRPDYADWLDEQKPSMAIETKKNRFDVYVKASMA.

S-adenosyl-L-methionine contacts are provided by residues 101 to 102 (RD), 117 to 118 (ER), 153 to 154 (SS), and aspartate 176.

It belongs to the methyltransferase superfamily. RsmJ family.

It localises to the cytoplasm. The enzyme catalyses guanosine(1516) in 16S rRNA + S-adenosyl-L-methionine = N(2)-methylguanosine(1516) in 16S rRNA + S-adenosyl-L-homocysteine + H(+). Functionally, specifically methylates the guanosine in position 1516 of 16S rRNA. The polypeptide is Ribosomal RNA small subunit methyltransferase J (Vibrio campbellii (strain ATCC BAA-1116)).